The sequence spans 211 residues: Prolactin (211 aa).

Positions 1 to 24 (MTHRRTKLFMMAAVVSYVMTSCGA) are cleaved as a signal peptide. 2 disulfide bridges follow: cysteine 70-cysteine 184 and cysteine 201-cysteine 211.

It belongs to the somatotropin/prolactin family.

The protein resides in the secreted. The polypeptide is Prolactin (prl) (Paralichthys olivaceus (Bastard halibut)).